Here is a 402-residue protein sequence, read N- to C-terminus: Multidrug resistance protein MdtH (402 aa).

Over 1–12 (MSRVSQARNLGK) the chain is Cytoplasmic. The helical transmembrane segment at 13–33 (YFLLIDNMLVVLGFFVVFPLI) threads the bilayer. At 34–98 (SIRFVDQMGW…GFATMGIAHE (65 aa)) the chain is on the periplasmic side. A helical transmembrane segment spans residues 99 to 116 (PWLLWFSCLLSGLGGTLF). The Cytoplasmic portion of the chain corresponds to 117–138 (DPPRSALVVKLIRPQQRGRFFS). A helical membrane pass occupies residues 139–159 (LLMMQDSAGAVIGALLGSWLL). At 160–164 (QYDFR) the chain is on the periplasmic side. Residues 165–185 (LVCATGAVLFVLCAAFNAWLL) form a helical membrane-spanning segment. The Cytoplasmic segment spans residues 186–213 (PAWKLSTVRTPVREGMTRVMRDKRFVTY). The chain crosses the membrane as a helical span at residues 214 to 234 (VLTLAGYYMLAVQVMLMLPIM). The Periplasmic segment spans residues 235-243 (VNDVAGAPS). A helical membrane pass occupies residues 244–264 (AVKWMYAIEACLSLTLLYPIA). Residues 265 to 276 (RWSEKHFRLEHR) are Cytoplasmic-facing. Residues 277-297 (LMAGLLIMSLSMMPVGMVSGL) form a helical membrane-spanning segment. At 298–299 (QQ) the chain is on the periplasmic side. The helical transmembrane segment at 300 to 320 (LFTLICLFYIGSIIAEPARET) threads the bilayer. Residues 321 to 339 (LSASLADARARGSYMGFSR) are Cytoplasmic-facing. Residues 340-360 (LGLAIGGAIGYIGGGWLFDLG) traverse the membrane as a helical segment. The Periplasmic portion of the chain corresponds to 361–367 (KSAHQPE). The chain crosses the membrane as a helical span at residues 368–388 (LPWMMLGIIGIFTFLALGWQF). At 389-402 (SQKRAARRLLERDA) the chain is on the cytoplasmic side.

This sequence belongs to the major facilitator superfamily. DHA1 family. MdtH (TC 2.A.1.2.21) subfamily.

The protein resides in the cell inner membrane. Functionally, confers resistance to norfloxacin and enoxacin. In Escherichia coli O139:H28 (strain E24377A / ETEC), this protein is Multidrug resistance protein MdtH.